We begin with the raw amino-acid sequence, 338 residues long: Methionyl-tRNA formyltransferase (338 aa).

Residue 110-113 (SLLP) participates in (6S)-5,6,7,8-tetrahydrofolate binding.

Belongs to the Fmt family.

The catalysed reaction is L-methionyl-tRNA(fMet) + (6R)-10-formyltetrahydrofolate = N-formyl-L-methionyl-tRNA(fMet) + (6S)-5,6,7,8-tetrahydrofolate + H(+). Attaches a formyl group to the free amino group of methionyl-tRNA(fMet). The formyl group appears to play a dual role in the initiator identity of N-formylmethionyl-tRNA by promoting its recognition by IF2 and preventing the misappropriation of this tRNA by the elongation apparatus. In Synechococcus sp. (strain CC9902), this protein is Methionyl-tRNA formyltransferase.